A 244-amino-acid polypeptide reads, in one-letter code: tRNA (guanine-N(7)-)-methyltransferase (244 aa).

Positions 1 to 24 (MTDSHVPHPESPAVEEGEERPHRR) are disordered. Residues Glu74, Glu99, Asp126, and Asp149 each coordinate S-adenosyl-L-methionine. Asp149 is an active-site residue. Substrate is bound by residues Lys153, Asp185, and 222-225 (TKFE).

Belongs to the class I-like SAM-binding methyltransferase superfamily. TrmB family.

The enzyme catalyses guanosine(46) in tRNA + S-adenosyl-L-methionine = N(7)-methylguanosine(46) in tRNA + S-adenosyl-L-homocysteine. It participates in tRNA modification; N(7)-methylguanine-tRNA biosynthesis. Catalyzes the formation of N(7)-methylguanine at position 46 (m7G46) in tRNA. The protein is tRNA (guanine-N(7)-)-methyltransferase of Pseudomonas savastanoi pv. phaseolicola (strain 1448A / Race 6) (Pseudomonas syringae pv. phaseolicola (strain 1448A / Race 6)).